A 479-amino-acid polypeptide reads, in one-letter code: Probable periplasmic serine endoprotease DegP-like (479 aa).

The N-terminal stretch at 1-27 (MSMPSLKKYAAALFAVFLMGQSVAAHA) is a signal peptide. Residues His118, Asp148, and Ser221 each act as charge relay system in the active site. Substrate contacts are provided by residues 219 to 221 (GNS) and 276 to 280 (LGVVI). PDZ domains follow at residues 265-356 (LKAS…VREG) and 362-468 (KVAV…LRQG). Positions 368 to 390 (MPADDGDEATNDAAPSAERSSNR) are disordered.

This sequence belongs to the peptidase S1C family.

It localises to the periplasm. The catalysed reaction is Acts on substrates that are at least partially unfolded. The cleavage site P1 residue is normally between a pair of hydrophobic residues, such as Val-|-Val.. Might be efficient in the degradation of transiently denatured and unfolded proteins which accumulate in the periplasm following stress conditions. The sequence is that of Probable periplasmic serine endoprotease DegP-like from Pseudomonas fulva (strain 12-X).